The following is a 359-amino-acid chain: Type-1 angiotensin II receptor A (359 aa).

The Extracellular segment spans residues 1–25; sequence MALNSSTEDGIKRIQDDCPRAGRHS. The N-linked (GlcNAc...) asparagine glycan is linked to N4. Residues Q15 and D17 each coordinate angiotensin II. Cystine bridges form between C18-C274 and C101-C180. Residues 26–55 form a helical membrane-spanning segment; the sequence is YIFVMIPTLYSIIFVVGIFGNSLVVIVIYF. Over 56 to 61 the chain is Cytoplasmic; sequence YMKLKT. A helical transmembrane segment spans residues 62–89; it reads VASVFLLNLALADLCFLLTLPLWAVYTA. Residues 90-98 lie on the Extracellular side of the membrane; the sequence is MEYRWPFGN. A helical membrane pass occupies residues 99-125; the sequence is HLCKIASASVSFNLYASVFLLTCLSID. Over 126-141 the chain is Cytoplasmic; that stretch reads RYLAIVHPMKSRLRRT. A helical transmembrane segment spans residues 142–165; it reads MLVAKVTCIIIWLMAGLASLPAVI. Over 166 to 190 the chain is Extracellular; that stretch reads HRNVYFIENTNITVCAFHYESRNST. R167 contacts angiotensin II. Residue N176 is glycosylated (N-linked (GlcNAc...) asparagine). The angiotensin II site is built by F182, H183, and Y184. N-linked (GlcNAc...) asparagine glycosylation is present at N188. Residues 191–216 traverse the membrane as a helical segment; that stretch reads LPIGLGLTKNILGFLFPFLIILTSYT. An angiotensin II-binding site is contributed by K199. Topologically, residues 217-239 are cytoplasmic; that stretch reads LIWKALKKAYEIQKNKPRNDDIF. Residues 240–268 traverse the membrane as a helical segment; that stretch reads RIIMAIVLFFFFSWVPHQIFTFLDVLIQL. Topologically, residues 269 to 278 are extracellular; the sequence is GVIHDCKIAD. Residues 279-304 traverse the membrane as a helical segment; sequence IVDTAMPITICIAYFNNCLNPLFYGF. Over 305-359 the chain is Cytoplasmic; the sequence is LGKKFKKYFLQLLKYIPPKAKSHSSLSTKMSTLSYRPSDNMSSAAKKPASCSEVE. The segment covering 335–347 has biased composition (polar residues); it reads STLSYRPSDNMSS. Positions 335 to 359 are disordered; it reads STLSYRPSDNMSSAAKKPASCSEVE. The S-palmitoyl cysteine moiety is linked to residue C355.

The protein belongs to the G-protein coupled receptor 1 family. As to quaternary structure, interacts with MAS1. Interacts with ARRB1. Interacts with FLNA (via filamin repeat 21); increases PKA-mediated phosphorylation of FLNA. In terms of processing, C-terminal Ser or Thr residues may be phosphorylated.

Its subcellular location is the cell membrane. In terms of biological role, receptor for angiotensin II, a vasoconstricting peptide, which acts as a key regulator of blood pressure and sodium retention by the kidney. The activated receptor in turn couples to G-alpha proteins G(q) (GNAQ, GNA11, GNA14 or GNA15) and thus activates phospholipase C and increases the cytosolic Ca(2+) concentrations, which in turn triggers cellular responses such as stimulation of protein kinase C. This chain is Type-1 angiotensin II receptor A (Agtr1a), found in Mus musculus (Mouse).